The chain runs to 222 residues: Proteoglycan 3 (222 aa).

A signal peptide spans 1–17 (MKQPLILSFLLLGMVSA). The segment covering 27–46 (NPKREESLKQEADGSREQGR) has biased composition (basic and acidic residues). Positions 27 to 100 (NPKREESLKQ…PKEEDTTHFQ (74 aa)) are disordered. The segment covering 71–81 (FEDEEAMESDP) has biased composition (acidic residues). Over residues 83–97 (ALNKDSACPKEEDTT) the composition is skewed to basic and acidic residues. Positions 105–221 (CKSCNYVLVR…CKSHLPFICS (117 aa)) constitute a C-type lectin domain. 2 disulfide bridges follow: Cys-126/Cys-220 and Cys-197/Cys-212.

Expressed in bone marrow, spleen, and thymus. Not detected in heart, liver or lung.

Possesses similar cytotoxic and cytostimulatory activities to PRG2/MBP. The chain is Proteoglycan 3 from Mus musculus (Mouse).